The chain runs to 588 residues: Endogenous retrovirus group K member 7 Env polyprotein (588 aa).

The fusion peptide stretch occupies residues 355 to 375 (FIFTLIAVIMGLIAVTATAAV). A helical transmembrane segment spans residues 522–542 (IGSTTIINLILILVCLFCLLL).

The protein belongs to the beta type-B retroviral envelope protein family. HERV class-II K(HML-2) env subfamily. As to quaternary structure, the surface (SU) and transmembrane (TM) proteins form a heterodimer. SU and TM are attached by noncovalent interactions or by a labile interchain disulfide bond. Post-translationally, specific enzymatic cleavages in vivo yield the mature SU and TM proteins. In terms of tissue distribution, expressed in lung, placenta, testis and peripheral blood lymphocytes.

It is found in the virion. The protein resides in the cell membrane. Its function is as follows. Retroviral envelope proteins mediate receptor recognition and membrane fusion during early infection. Endogenous envelope proteins may have kept, lost or modified their original function during evolution. Functionally, SU mediates receptor recognition. In terms of biological role, TM anchors the envelope heterodimer to the viral membrane through one transmembrane domain. The other hydrophobic domain, called fusion peptide, mediates fusion of the viral membrane with the target cell membrane. This Homo sapiens (Human) protein is Endogenous retrovirus group K member 7 Env polyprotein (ERVK-7).